A 258-amino-acid polypeptide reads, in one-letter code: Trans-aconitate 2-methyltransferase (258 aa).

It belongs to the methyltransferase superfamily. Tam family.

It is found in the cytoplasm. It catalyses the reaction trans-aconitate + S-adenosyl-L-methionine = (E)-3-(methoxycarbonyl)pent-2-enedioate + S-adenosyl-L-homocysteine. Its function is as follows. Catalyzes the S-adenosylmethionine monomethyl esterification of trans-aconitate. The protein is Trans-aconitate 2-methyltransferase of Deinococcus radiodurans (strain ATCC 13939 / DSM 20539 / JCM 16871 / CCUG 27074 / LMG 4051 / NBRC 15346 / NCIMB 9279 / VKM B-1422 / R1).